We begin with the raw amino-acid sequence, 192 residues long: Adenylate kinase (192 aa).

Residue 10–18 (GVPGVGKTT) coordinates ATP.

It belongs to the archaeal adenylate kinase family.

It localises to the cytoplasm. The catalysed reaction is AMP + ATP = 2 ADP. The chain is Adenylate kinase from Methanoculleus marisnigri (strain ATCC 35101 / DSM 1498 / JR1).